The sequence spans 344 residues: N-lysine methyltransferase KMT5A-A (344 aa).

The segment at 143–176 (TSSKHRKPARRKVKRSTKRAAESKSPANRKVTDY) is disordered. Residues 145-160 (SKHRKPARRKVKRSTK) show a composition bias toward basic residues. The region spanning 208 to 329 (DGMMVRFIEG…EGEELLYDYG (122 aa)) is the SET domain. Residues 218–220 (KGR), Y263, and 290–291 (NH) contribute to the S-adenosyl-L-methionine site.

The protein belongs to the class V-like SAM-binding methyltransferase superfamily. Histone-lysine methyltransferase family. PR/SET subfamily.

The protein resides in the nucleus. Its subcellular location is the chromosome. It carries out the reaction L-lysyl(20)-[histone H4] + S-adenosyl-L-methionine = N(6)-methyl-L-lysyl(20)-[histone H4] + S-adenosyl-L-homocysteine + H(+). The catalysed reaction is L-lysyl-[protein] + S-adenosyl-L-methionine = N(6)-methyl-L-lysyl-[protein] + S-adenosyl-L-homocysteine + H(+). In terms of biological role, protein-lysine N-methyltransferase that monomethylates both histones and non-histone proteins. Specifically monomethylates 'Lys-20' of histone H4 (H4K20me1). H4K20me1 is enriched during mitosis and represents a specific tag for epigenetic transcriptional repression. Mainly functions in euchromatin regions, thereby playing a central role in the silencing of euchromatic genes. Required for cell proliferation, probably by contributing to the maintenance of proper higher-order structure of DNA during mitosis. Involved in chromosome condensation and proper cytokinesis. This is N-lysine methyltransferase KMT5A-A from Danio rerio (Zebrafish).